Consider the following 1074-residue polypeptide: Pleckstrin homology domain-containing family M member 1 (1074 aa).

Positions Thr40–Ala182 constitute an RUN domain. 3 disordered regions span residues Gln214–Arg244, Leu272–Thr336, and Asp382–Glu454. The residue at position 218 (Ser218) is a Phosphoserine. Composition is skewed to polar residues over residues Ser313–Pro329 and Pro393–Ser404. Residues Ser433, Ser436, and Ser491 each carry the phosphoserine modification. The segment at Gly506–Pro526 is disordered. A compositionally biased stretch (pro residues) spans Ala511–Ala525. The region spanning Gly551–Gln642 is the PH 1 domain. The LIR signature appears at Glu649–Ile655. The segment at Ala661–Pro680 is disordered. The tract at residues Leu672–Ser1074 is interaction with RAB7A. Residues Asp701–Ala795 enclose the PH 2 domain. Residues Gln1004–Cys1058 form a Phorbol-ester/DAG-type zinc finger.

Interacts (via N- and C-terminus) with RAB7A (GTP-bound form). Simultaneously interacts with RAB7A and ARL8B; bringing about clustering and fusion of late endosomes and lysosomes. Interacts (via RUN domain) with ARL8B (GTP-bound form); the interaction is required for PLEKHM1 localization to lysosomes and for ARL8B function in delivery and degradation of endocytic and autophagic cargo in lysosomes. PLEKHM1 and PLEKHM2 compete for interaction with ARL8B. Interacts with ARL8A; the interaction is weaker than with ARL8B. Interacts with VPS41, VPS11, VPS18, VPS33A and VPS39; indicative for an association with the HOPS complex; the interactions with, at least, VPS41, VPS11, VPS18 and VPS33A require ARL8B. Interacts with GABARAP, GABARAPL, GABARAPL2, MAP1LC3A, MAP1LC3B and MAP1LC3C. Interacts with PAFAH1B. Interacts (via N- and C-terminus) with NDEL1. Interacts (via C-terminus) with MAP3K7. Interacts (via N- and C-terminus) with FAM98A. Interacts (via C-terminus) with DEF8; this interaction is weak but increased in a RAB7A-dependent manner. May interact with sialyl-lex-positive protein.

Its subcellular location is the autolysosome membrane. It localises to the endosome membrane. The protein localises to the late endosome membrane. It is found in the lysosome membrane. In terms of biological role, acts as a multivalent adapter protein that regulates Rab7-dependent and HOPS complex-dependent fusion events in the endolysosomal system and couples autophagic and the endocytic trafficking pathways. Acts as a dual effector of RAB7A and ARL8B that simultaneously binds these GTPases, bringing about clustering and fusion of late endosomes and lysosomes. Required for late stages of endolysosomal maturation, facilitating both endocytosis-mediated degradation of growth factor receptors and autophagosome clearance. Interaction with Arl8b is a crucial factor in the terminal maturation of autophagosomes and to mediate autophagosome-lysosome fusion. Positively regulates lysosome peripheral distribution and ruffled border formation in osteoclasts. May be involved in negative regulation of endocytic transport from early endosome to late endosome/lysosome implicating its association with Rab7. May have a role in sialyl-lex-mediated transduction of apoptotic signals. Involved in bone resorption. The chain is Pleckstrin homology domain-containing family M member 1 from Mus musculus (Mouse).